A 147-amino-acid chain; its full sequence is Large ribosomal subunit protein uL16 (147 aa).

The protein belongs to the universal ribosomal protein uL16 family. As to quaternary structure, part of the 50S ribosomal subunit.

Functionally, binds 23S rRNA and is also seen to make contacts with the A and possibly P site tRNAs. In Caldicellulosiruptor saccharolyticus (strain ATCC 43494 / DSM 8903 / Tp8T 6331), this protein is Large ribosomal subunit protein uL16.